The sequence spans 489 residues: Cobyric acid synthase (489 aa).

A GATase cobBQ-type domain is found at 247 to 439 (ALKVVVPVLP…IHGVFDEPAA (193 aa)). Residue Cys-328 is the Nucleophile of the active site. His-431 is an active-site residue.

It belongs to the CobB/CobQ family. CobQ subfamily.

The protein operates within cofactor biosynthesis; adenosylcobalamin biosynthesis. Its function is as follows. Catalyzes amidations at positions B, D, E, and G on adenosylcobyrinic A,C-diamide. NH(2) groups are provided by glutamine, and one molecule of ATP is hydrogenolyzed for each amidation. This is Cobyric acid synthase from Marinobacter nauticus (strain ATCC 700491 / DSM 11845 / VT8) (Marinobacter aquaeolei).